The primary structure comprises 536 residues: MEKIRERFKQSKSSNESVRLRKRSSILYSTDDRKLQTLKIFGINITVFIVLVRLLNCVLVQTSFVPDEFWQSLEISHRMVFGYGYETWEWKEGIRGYSYPLLFALMYKLLQLISYDTVYLLVFVPRVFQALLAAYADVKLYKLILQWETPDVAKWTCFCQLCSWFAWFCCSRTLTNTTETALTTLALCFYPLPGSKTHSSWKYLTLVSLAVVIRPTALIVWFPLIFYHFCTDQDKLKLITHRYFPIGVLALGVSTLIDSFFYGKWIFVQWNFLKFNVLHNVGEFYGSHPWHWYWTQGLPVVIGPHLPLVLHGCLLSTRKHTILLLTIIWTTAVYSLLAHKEFRFIYPVLPFCMIFCGLSLAKLQAWRKAAAGALLLFNLCPALYTGLVHQRGALDVMHVLQPLCVSSQSPNPPELLFLMPCHSTPLYSHLHCPLKLRFLECPPDLTGRQDYMDEADVFFSDPLHWLNTSFPLRSTLPSHLVLFDSLQKEISSFLEENSFAKQAEIFHTHFPEGRVGKNILIYSRRSEMKINEGFIL.

N-linked (GlcNAc...) asparagine glycosylation is present at asparagine 15. Helical transmembrane passes span 40–60 (IFGI…CVLV) and 118–138 (VYLL…YADV). A glycan (N-linked (GlcNAc...) asparagine) is linked at asparagine 176. A run of 6 helical transmembrane segments spans residues 206–226 (LVSL…PLIF), 243–263 (YFPI…FFYG), 297–317 (GLPV…LLST), 322–342 (ILLL…HKEF), 344–364 (FIYP…AKLQ), and 369–389 (AAAG…GLVH). An N-linked (GlcNAc...) asparagine glycan is attached at asparagine 467.

The protein belongs to the glycosyltransferase 22 family. PIGB subfamily.

It localises to the endoplasmic reticulum membrane. The protein operates within glycolipid biosynthesis; glycosylphosphatidylinositol-anchor biosynthesis. Alpha-1,2-mannosyltransferase that catalyzes the transfer of the third mannose, via an alpha-1,2 bond, from a dolichol-phosphate-mannose (Dol-P-Man) to an alpha-D-Man-(1-&gt;6)-2-PEtn-alpha-D-Man-(1-&gt;4)-alpha-D-GlcN-(1-&gt;6)-(1-radyl,2-acyl-sn-glycero-3-phospho)-2-acyl-inositol intermediate to generate an alpha-D-Man-(1-&gt;2)-alpha-D-Man-(1-&gt;6)-2-PEtn-alpha-D-Man-(1-&gt;4)-alpha-D-GlcN-(1-&gt;6)-(1-radyl,2-acyl-sn-glycero-3-phospho)-2-acyl-inositol (also termed H6) and participates in the nineth step of the glycosylphosphatidylinositol-anchor biosynthesis. May also add the third mannose to an alpha-D-Man-(1-&gt;6)-alpha-D-Man-(1-&gt;4)-alpha-D-GlcN-(1-&gt;6)-(1-radyl,2-acyl-sn-glycero-3-phospho)-2-acyl-inositol (also termed H3) intermediate generating an alpha-D-Man-(1-&gt;2)-alpha-D-Man-(1-&gt;6)-alpha-D-Man-(1-&gt;4)-alpha-D-GlcN-(1-&gt;6)-(1-radyl,2-acyl-sn-glycero-3-phospho)-2-acyl-inositol (also termed H4). In Danio rerio (Zebrafish), this protein is GPI alpha-1,2-mannosyltransferase 3.